The sequence spans 293 residues: ELMO domain-containing protein 2 (293 aa).

The 157-residue stretch at 126 to 282 folds into the ELMO domain; sequence QHEELLMKLW…KFHEKIKGLL (157 aa).

Alveolar cells (morphologically type II cells) and alveolar macrophages (at protein level). Expressed in brain, colon, heart, kidney, liver, lung, muscle, placenta, small intestine, spleen, stomach and testis. In lung it is expressed in alveolar macrophages and alveolar walls.

Its function is as follows. Acts as a GTPase-activating protein (GAP) toward guanine nucleotide exchange factors like ARL2, ARL3, ARF1 and ARF6, but not for GTPases outside the Arf family. Regulates IFN-related antiviral responses. This Homo sapiens (Human) protein is ELMO domain-containing protein 2 (ELMOD2).